Here is a 194-residue protein sequence, read N- to C-terminus: MKKERLMSINKEKAEAAIYQFLEAIGENPNREGLLDTPKRVAKMYAEMFLGLGKDPKEEFTAVFKEQHEDVVIVKGISFYSICEHHLVPFYGKAHIAYLPSDGRVTGLSKLARAVEVASKRPQLQERLTSQIADALVEALNPKGTLVMVEAEHMCMTMRGIKKPGSKTITTTARGLYKESRAERQEVISLMTKD.

Positions 83, 86, and 155 each coordinate Zn(2+).

It belongs to the GTP cyclohydrolase I family. Homomer.

It catalyses the reaction GTP + H2O = 7,8-dihydroneopterin 3'-triphosphate + formate + H(+). The protein operates within cofactor biosynthesis; 7,8-dihydroneopterin triphosphate biosynthesis; 7,8-dihydroneopterin triphosphate from GTP: step 1/1. The chain is GTP cyclohydrolase 1 from Streptococcus pyogenes serotype M49 (strain NZ131).